Consider the following 717-residue polypeptide: UV-stimulated scaffold protein A (717 aa).

Residues 2–145 (DQKLSQLIEE…HFLKHTKKVD (144 aa)) form a VHS-like region. A coiled-coil region spans residues 169–199 (KIHRESADRAKREMEEMYDEIECCLTEVENC). 4 disordered regions span residues 231 to 253 (PLSP…EEQP), 277 to 301 (QTAM…RSHG), 389 to 418 (PGRG…EKEG), and 479 to 503 (CLSS…QAER). Phosphoserine is present on residues Ser284, Ser291, and Ser403. 2 stretches are compositionally biased toward acidic residues: residues 285–294 (RDEDEPSDPD) and 400–412 (LEDS…DFVE). Lys416 is covalently cross-linked (Glycyl lysine isopeptide (Lys-Gly) (interchain with G-Cter in ubiquitin)). The segment covering 479-489 (CLSSPSPSSTR) has biased composition (polar residues). The UVSSA-type zinc-finger motif lies at 571-598 (QHKCRALRPNGRLCERQDRLKCPFHGKI). Cys574, Cys584, Cys592, and His595 together coordinate Zn(2+). A disordered region spans residues 595 to 672 (HGKIIPRDDK…HPNLTDLRER (78 aa)). Residues 599–618 (IPRDDKGQPLNPEDRAREQR) are compositionally biased toward basic and acidic residues. The segment covering 652-664 (SSKKGKGKKKKHP) has biased composition (basic residues).

This sequence belongs to the UVSSA family. In terms of assembly, interacts with the elongating form of RNA polymerase II (RNA pol IIo) during transcription stress. Interacts with the TFIIH complex during transcription stress. Interacts with ERCC6. Interacts with ERCC8. Interacts with USP7. Post-translationally, monoubiquitinated at Lys-416 in response to transcription stress; this promotes efficient transfer of TFIIH to stalled RNA polymerase II.

It localises to the chromosome. Its function is as follows. Factor involved in transcription-coupled nucleotide excision repair (TC-NER), a mechanism that rapidly removes RNA polymerase II-blocking lesions from the transcribed strand of active genes. Acts as a key adapter that promotes recruitment of factors involved in TC-NER. Facilitates the ubiquitination of the elongating form of RNA polymerase II (RNA pol IIo) at DNA damage sites, thereby promoting RNA pol IIo backtracking and access by the TC-NER machinery to lesion sites. Also promotes stabilization of ERCC6/CSB by recruiting deubiquitinating enzyme USP7 to TC-NER complexes, preventing UV-induced degradation of ERCC6 by the proteasome. Mediates the recruitment of the TFIIH complex and other factors that are required for nucleotide excision repair to RNA polymerase II. Also required to inactivate stalled RNA polymerase II by blocking the access of TCEA1/TFIIS, thereby preventing reactivation of RNA polymerase II. Not involved in processing oxidative damage. The chain is UV-stimulated scaffold protein A (Uvssa) from Mus musculus (Mouse).